A 443-amino-acid polypeptide reads, in one-letter code: Threonine/serine transporter TdcC (443 aa).

11 consecutive transmembrane segments (helical) span residues 24–44 (WVLGLFGTAIGAGVLFFPISA), 45–65 (GIGGLLPIIFMLILAFPIAFF), 95–115 (VGGVVITFLYFFAICPLLWIY), 140–160 (VVALAILLVMAFFIYFGKDLM), 163–183 (VMGYLVFPFITCLVLISLSLI), 207–227 (ILVTVWLGIAIMVFSFNFSPI), 259–279 (ASVLMVVVVMFFAFSCLFTLS), 319–339 (ASIIALVAIFKSFFGHYLGTL), 363–383 (LNMISMVIIMGSTWVIAYINP), 385–405 (ILDLIGAMGAPIIAALLCLLP), and 423–443 (SNYFVTIIGLLTILNIVYQLM).

The protein belongs to the amino acid/polyamine transporter 2 family. SdaC/TdcC subfamily.

The protein localises to the cell inner membrane. The catalysed reaction is L-threonine(in) + H(+)(in) = L-threonine(out) + H(+)(out). The enzyme catalyses L-serine(in) + H(+)(in) = L-serine(out) + H(+)(out). In terms of biological role, involved in the import of threonine and serine into the cell, with the concomitant import of a proton (symport system). The sequence is that of Threonine/serine transporter TdcC from Edwardsiella piscicida.